The sequence spans 121 residues: MARIAGVNIPNHQHTEIGLTAIFGIGRTRSRSICVAAGVDFSKKVKDLTDADLEKLREEVGKFVVEGDLRREVTMNIKRLMDLGCYRGVRHRKGLPMRGQRTRTNARTRKGPRRAAQALKK.

The disordered stretch occupies residues 92-121 (RKGLPMRGQRTRTNARTRKGPRRAAQALKK).

The protein belongs to the universal ribosomal protein uS13 family. In terms of assembly, part of the 30S ribosomal subunit. Forms a loose heterodimer with protein S19. Forms two bridges to the 50S subunit in the 70S ribosome.

In terms of biological role, located at the top of the head of the 30S subunit, it contacts several helices of the 16S rRNA. In the 70S ribosome it contacts the 23S rRNA (bridge B1a) and protein L5 of the 50S subunit (bridge B1b), connecting the 2 subunits; these bridges are implicated in subunit movement. Contacts the tRNAs in the A and P-sites. This is Small ribosomal subunit protein uS13 from Burkholderia cenocepacia (strain ATCC BAA-245 / DSM 16553 / LMG 16656 / NCTC 13227 / J2315 / CF5610) (Burkholderia cepacia (strain J2315)).